The chain runs to 316 residues: Fe-S cluster assembly protein DRE2 (316 aa).

Residues 7-139 (VSPPKRTLLL…PDYGDNEGAV (133 aa)) are N-terminal SAM-like domain. A linker region spans residues 140-208 (TLKFGLKKKN…EDTLMTEEDL (69 aa)). [2Fe-2S] cluster contacts are provided by Cys218, Cys229, Cys232, and Cys234. The fe-S binding site A stretch occupies residues 218-234 (CQPKAGKRRRACKDCSC). Positions 279, 282, 290, and 293 each coordinate [4Fe-4S] cluster. Short sequence motifs (cx2C motif) lie at residues 279 to 282 (CGNC) and 290 to 293 (CDGC). The fe-S binding site B stretch occupies residues 279 to 293 (CGNCSLGDAFRCDGC).

The protein belongs to the anamorsin family. In terms of assembly, monomer. Interacts with TAH18. Interacts with MIA40. The cofactor is [2Fe-2S] cluster. [4Fe-4S] cluster is required as a cofactor.

The protein resides in the cytoplasm. Its subcellular location is the mitochondrion intermembrane space. Its function is as follows. Component of the cytosolic iron-sulfur (Fe-S) protein assembly (CIA) machinery required for the maturation of extramitochondrial Fe-S proteins. Part of an electron transfer chain functioning in an early step of cytosolic Fe-S biogenesis, facilitating the de novo assembly of a [4Fe-4S] cluster on the scaffold complex CFD1-NBP35. Electrons are transferred to DRE2 from NADPH via the FAD- and FMN-containing protein TAH18. TAH18-DRE2 are also required for the assembly of the diferric tyrosyl radical cofactor of ribonucleotide reductase (RNR), probably by providing electrons for reduction during radical cofactor maturation in the catalytic small subunit RNR2. In Fusarium vanettenii (strain ATCC MYA-4622 / CBS 123669 / FGSC 9596 / NRRL 45880 / 77-13-4) (Fusarium solani subsp. pisi), this protein is Fe-S cluster assembly protein DRE2.